The sequence spans 652 residues: DNA ligase (652 aa).

NAD(+)-binding positions include 29 to 33, 78 to 79, and Glu-107; these read DAEYD and SL. The active-site N6-AMP-lysine intermediate is Lys-109. 4 residues coordinate NAD(+): Arg-130, Glu-164, Lys-278, and Lys-302. Cys-395, Cys-398, Cys-413, and Cys-418 together coordinate Zn(2+). The BRCT domain occupies 577-652; sequence ADDAILSGKT…VKDEAWLLDL (76 aa).

This sequence belongs to the NAD-dependent DNA ligase family. LigA subfamily. Mg(2+) is required as a cofactor. The cofactor is Mn(2+).

It carries out the reaction NAD(+) + (deoxyribonucleotide)n-3'-hydroxyl + 5'-phospho-(deoxyribonucleotide)m = (deoxyribonucleotide)n+m + AMP + beta-nicotinamide D-nucleotide.. DNA ligase that catalyzes the formation of phosphodiester linkages between 5'-phosphoryl and 3'-hydroxyl groups in double-stranded DNA using NAD as a coenzyme and as the energy source for the reaction. It is essential for DNA replication and repair of damaged DNA. This chain is DNA ligase, found in Streptococcus thermophilus (strain CNRZ 1066).